Reading from the N-terminus, the 153-residue chain is 3-hydroxyacyl-[acyl-carrier-protein] dehydratase FabZ (153 aa).

Histidine 58 is an active-site residue.

Belongs to the thioester dehydratase family. FabZ subfamily.

Its subcellular location is the cytoplasm. The enzyme catalyses a (3R)-hydroxyacyl-[ACP] = a (2E)-enoyl-[ACP] + H2O. Involved in unsaturated fatty acids biosynthesis. Catalyzes the dehydration of short chain beta-hydroxyacyl-ACPs and long chain saturated and unsaturated beta-hydroxyacyl-ACPs. This Bradyrhizobium diazoefficiens (strain JCM 10833 / BCRC 13528 / IAM 13628 / NBRC 14792 / USDA 110) protein is 3-hydroxyacyl-[acyl-carrier-protein] dehydratase FabZ.